We begin with the raw amino-acid sequence, 338 residues long: Fructose-1,6-bisphosphatase class 1 (338 aa).

Mg(2+) is bound by residues E90, D112, L114, and D115. Substrate is bound by residues 115-118 (DGSS), N207, and K273. Residue E279 participates in Mg(2+) binding.

Belongs to the FBPase class 1 family. In terms of assembly, homotetramer. Mg(2+) is required as a cofactor.

It localises to the cytoplasm. It carries out the reaction beta-D-fructose 1,6-bisphosphate + H2O = beta-D-fructose 6-phosphate + phosphate. It functions in the pathway carbohydrate biosynthesis; gluconeogenesis. The sequence is that of Fructose-1,6-bisphosphatase class 1 from Stenotrophomonas maltophilia (strain K279a).